Reading from the N-terminus, the 936-residue chain is ABC transporter A family member 5 (936 aa).

A run of 7 helical transmembrane segments spans residues 34–54 (LIVI…LFDT), 340–360 (ASLI…PVML), 393–413 (FLAI…AIGL), 422–442 (SIQF…AFLV), 454–474 (VAAY…FQFL), 484–501 (WIYI…RGLY), and 527–547 (AMEE…IAAY). An ABC transporter domain is found at 614–851 (IVCDNLKKVY…YGGSYVLTMT (238 aa)). 652–659 (GPNGAGKT) serves as a coordination point for ATP.

Belongs to the ABC transporter superfamily. ABCA family. CPR flippase (TC 3.A.1.211) subfamily.

It localises to the membrane. The sequence is that of ABC transporter A family member 5 (ABCA5) from Arabidopsis thaliana (Mouse-ear cress).